The chain runs to 864 residues: Xylosyltransferase 2 (864 aa).

The Cytoplasmic portion of the chain corresponds to 1-15 (MVASARVQKLVRRYK). The helical; Signal-anchor for type II membrane protein transmembrane segment at 16-36 (LAIATALAILLLQGLVVWSFS) threads the bilayer. Residues 37-864 (GLEEDEPGEK…GPVKADGRLR (828 aa)) are Lumenal-facing. Disordered stretches follow at residues 39–123 (EEDE…RQNL) and 136–158 (AGFP…DNSF). A compositionally biased stretch (basic and acidic residues) spans 53–65 (RPLDPGEGSKDTD). Positions 73-82 (SAGRRHGRWR) are enriched in basic residues. N122 carries an N-linked (GlcNAc...) asparagine glycan. 4 cysteine pairs are disulfide-bonded: C162/C190, C206/C448, C467/C480, and C469/C478. UDP-alpha-D-xylose is bound by residues V239, D267, and 296–298 (TIW). N-linked (GlcNAc...) asparagine glycosylation is present at N327. A UDP-alpha-D-xylose-binding site is contributed by 400-401 (DW). UDP-alpha-D-xylose is bound by residues S481 and 504-505 (RK). Intrachain disulfides connect C580–C832 and C825–C838. N682 carries an N-linked (GlcNAc...) asparagine glycan.

This sequence belongs to the glycosyltransferase 14 family. XylT subfamily. As to quaternary structure, monomer. Mg(2+) is required as a cofactor. Requires Mn(2+) as cofactor. In terms of processing, contains disulfide bonds.

It localises to the golgi apparatus membrane. The protein localises to the secreted. It catalyses the reaction UDP-alpha-D-xylose + L-seryl-[protein] = 3-O-(beta-D-xylosyl)-L-seryl-[protein] + UDP + H(+). Its pathway is glycan metabolism; chondroitin sulfate biosynthesis. It participates in glycan metabolism; heparan sulfate biosynthesis. Its function is as follows. Catalyzes the first step in the biosynthesis of chondroitin sulfate, heparan sulfate and dermatan sulfate proteoglycans, such as DCN. Transfers D-xylose from UDP-D-xylose to specific serine residues of the core protein. This Rattus norvegicus (Rat) protein is Xylosyltransferase 2 (Xylt2).